The chain runs to 338 residues: Fructose-1,6-bisphosphatase class 1 1 (338 aa).

Mg(2+) is bound by residues E94, D116, L118, and D119. Substrate is bound by residues 119–122, N210, and K276; that span reads DGSS. A Mg(2+)-binding site is contributed by E282.

It belongs to the FBPase class 1 family. Homotetramer. Requires Mg(2+) as cofactor.

The protein localises to the cytoplasm. It catalyses the reaction beta-D-fructose 1,6-bisphosphate + H2O = beta-D-fructose 6-phosphate + phosphate. It participates in carbohydrate biosynthesis; gluconeogenesis. This is Fructose-1,6-bisphosphatase class 1 1 from Paraburkholderia xenovorans (strain LB400).